The chain runs to 180 residues: Prorelaxin (180 aa).

The first 25 residues, 1-25 (MLRLFLSHLLGVWLLLSLRARKIPA), serve as a signal peptide directing secretion. Cystine bridges form between Cys33–Cys167, Cys45–Cys180, and Cys166–Cys171. Residues 53 to 154 (SSQQHREPRQ…RSRLDAHSRI (102 aa)) constitute a propeptide, connecting peptide.

This sequence belongs to the insulin family. In terms of assembly, heterodimer of a B chain and an A chain linked by two disulfide bonds. As to expression, expressed by the placenta. Exclusively detected in cells located in the lamellar placental labyrinth and absent from other placental and non-placental uterine parts.

The protein localises to the secreted. In terms of biological role, relaxin is an ovarian hormone that acts with estrogen to produce dilatation of the birth canal in many mammals. The protein is Prorelaxin (RLN) of Felis catus (Cat).